The sequence spans 213 residues: Protein FAM156A/FAM156B (213 aa).

An N-acetylmethionine modification is found at Met-1. A disordered region spans residues 1-62; it reads MDPLQKRNPA…SQAVPLPEGL (62 aa). Positions 8–37 are enriched in polar residues; it reads NPASPSKSSPMTAAETSQEGPAPSQPSYSE. Ser-114 carries the post-translational modification Phosphoserine. The helical transmembrane segment at 154-170 threads the bilayer; it reads WETLVQGLSGLTLSLGT. The interval 165 to 198 is disordered; sequence TLSLGTNQPGPLPEAALQPQETEEKRQRERQQES. Residues 186 to 197 show a composition bias toward basic and acidic residues; it reads TEEKRQRERQQE.

It localises to the membrane. This is Protein FAM156A/FAM156B (FAM156A) from Homo sapiens (Human).